We begin with the raw amino-acid sequence, 207 residues long: Acyl-homoserine-lactone synthase (207 aa).

It belongs to the autoinducer synthase family.

The catalysed reaction is a fatty acyl-[ACP] + S-adenosyl-L-methionine = an N-acyl-L-homoserine lactone + S-methyl-5'-thioadenosine + holo-[ACP] + H(+). In terms of biological role, required for the synthesis of N-butanoyl-L-homoserine lactone (BHL), an autoinducer molecule which binds to AhyR. The protein is Acyl-homoserine-lactone synthase (ahyI) of Aeromonas hydrophila.